We begin with the raw amino-acid sequence, 608 residues long: ATP-citrate synthase beta chain protein 2 (608 aa).

ATP-binding positions include 214 to 234 (ILRFNNIPQIKMMVVLGELGG) and 265 to 291 (FKSEVQFGHAGAKSGGEMESAQAKNQA). A Mg(2+)-binding site is contributed by E231. The Tele-phosphohistidine intermediate role is filled by H273. 292–302 (LIDAGAIVPTS) lines the CoA pocket.

This sequence belongs to the succinate/malate CoA ligase alpha subunit family. In terms of assembly, heterooctamer of 4 alpha and 4 beta chains. Expressed in trichomes, epidermal leaf cells, anther tapetal cells, stigma and in young vascular bundles of expanding leaves, cotyledons, roots, pedicel of flowers and siliques.

Its subcellular location is the cytoplasm. The protein resides in the cytosol. The enzyme catalyses oxaloacetate + acetyl-CoA + ADP + phosphate = citrate + ATP + CoA. Its function is as follows. ATP citrate-lyase is the primary enzyme responsible for the synthesis of cytosolic acetyl-CoA, used for the elongation of fatty acids and biosynthesis of isoprenoids, flavonoids and malonated derivatives. May supply substrate to the cytosolic acetyl-CoA carboxylase, which generates the malonyl-CoA used for the synthesis of a multitude of compounds, including very long chain fatty acids and flavonoids. Required for normal growth and development and elongation of C18 fatty acids to C20 to C24 fatty acids in seeds. n contrast to all known animal ACL enzymes having a homomeric structure, plant ACLs are composed of alpha and beta chains. The sequence is that of ATP-citrate synthase beta chain protein 2 from Arabidopsis thaliana (Mouse-ear cress).